A 902-amino-acid polypeptide reads, in one-letter code: MPSNGGIIPGPANAASLPAPVLIEDNWVCCDMCHKWRLLPYGTNTSMLPKKWICSMLDWLPGMNKCDISEDETTNALNALYVTQIPAAGVSSGGPHTAHASVAASSTYNISGQLGQSRKRKNALKDENCYEHDQQAPAKMTLTSNQQAPAKNREVVDSEHYTNDRDPVSTHDLVPQSKSASERHKSKHKSRSSHSDGGDLTEKSKKHSKSKNRRGIDRDEHKTSKKTKKEDRHYFNKDWKNEYDLAGNKVRDETKALSAKAKMSKDSCEQDEFSLRKEKASRFDILEKTKRINDDDVAFHEKMKEHRAGIETLDLSGKKKTVKEWEDNRLSSMDHTSKGGDNENLNERLSKIKKSEARPEEVQDANALFSSAGRRQDNELVADNKFVTCKEGPSELWDNQPPRQVLNLAEPTRRDVACLQSSTVATSSSSKVSSSRRNKNSREAKGSPVESVSSSPLKNSNTDKISKARKTGKDGELNADSSILHTPMKYPTHEVGLLHTGQQAVGEAILRGSTNNSGMGRVDNQLYPGDKKILDMHGPTLQPDQQDCFNPRATADSTGHKSKNSAPSRQGRNGSSNLISEGNKQIEMSSRKEKLRPSIDNQDMQKSIGQDNHSHMKEGKSEVHTTRVKPGASKNHTQLRSNVENGDSASPIRRDGNMIAFALKEARDLKHKANHLKEKGLELESMGLYFEAALKFLHVASLWETPNLDNSRSGDVAQSMKMYSETAKLCSFCAHAYERCNKMASAALAYKCVEVAYLKAAYYKHPSASKDRQELQSVVQIAPGESPSSSASDIDNLNSHGLSKALSTKGGNSPQVAGNHLPLAVRNQAHLLRLLAYTNDVNCAFDATRKSQVAIASAASSQERGKTVDDGLASVRTVLDFNFNNVNELLRLVRLSMELINT.

The segment at 21–74 (VLIEDNWVCCDMCHKWRLLPYGTNTSMLPKKWICSMLDWLPGMNKCDISEDETT) adopts a CW-type zinc-finger fold. Residues Cys30, Cys33, Cys54, and Cys66 each contribute to the Zn(2+) site. Disordered regions lie at residues 131 to 233 (EHDQ…EDRH), 326 to 345 (EDNR…NENL), 420 to 480 (QSST…LNAD), and 537 to 651 (HGPT…SASP). 2 stretches are compositionally biased toward basic and acidic residues: residues 151 to 169 (KNRE…DPVS) and 193 to 203 (SHSDGGDLTEK). Over residues 204 to 213 (SKKHSKSKNR) the composition is skewed to basic residues. Basic and acidic residues-rich tracts occupy residues 214 to 233 (RGID…EDRH) and 335 to 345 (HTSKGGDNENL). Low complexity predominate over residues 421–433 (SSTVATSSSSKVS). 3 stretches are compositionally biased toward polar residues: residues 450–463 (ESVS…SNTD), 564–588 (NSAP…QIEM), and 599–611 (IDNQ…IGQD). Positions 612-625 (NHSHMKEGKSEVHT) are enriched in basic and acidic residues. Positions 634–648 (KNHTQLRSNVENGDS) are enriched in polar residues.

In terms of tissue distribution, expressed in leaf sheaths, flag leaves, nodes, internodes and panicles.

The protein localises to the nucleus. In terms of biological role, binds to histones H3K4me1, H3K4me2 and H3K4me3 in GST pull-down assay. May facilitate the recruitment of effectors to mediate gene expression. In Oryza sativa subsp. japonica (Rice), this protein is Cysteine-tryptophan domain-containing zinc finger protein 3.